A 1252-amino-acid polypeptide reads, in one-letter code: Immunoglobulin superfamily DCC subclass member 4 (1252 aa).

The signal sequence occupies residues 1 to 22 (MARADTGRGLLVLTFCLLSARG). The Extracellular segment spans residues 23-956 (ELPLPQETTV…SDSLDVHAVT (934 aa)). Ig-like domains follow at residues 27–136 (PQET…VAVV), 142–228 (EDFS…ASLT), 241–329 (QDVV…AELR), and 334–420 (PAIS…APLA). 2 disulfides stabilise this stretch: Cys-55–Cys-120 and Cys-163–Cys-211. N-linked (GlcNAc...) asparagine glycosylation occurs at Asn-88. Asn-251 carries N-linked (GlcNAc...) asparagine glycosylation. 2 disulfide bridges follow: Cys-264-Cys-311 and Cys-355-Cys-404. 5 consecutive Fibronectin type-III domains span residues 430–524 (APTR…TLDD), 526–622 (PSAA…TPGV), 631–742 (APAE…TPDL), 751–844 (PPAH…TLPD), and 849–944 (PPSD…TLQK). Residues 669 to 688 (TEEEADGDRPPGGRGDQAWD) are disordered. A helical transmembrane segment spans residues 957-977 (GIIVGVCLGLLCLLACMCAGL). The Cytoplasmic segment spans residues 978-1252 (RRSSHREALP…RAPVSSAQVP (275 aa)). A Phosphothreonine modification is found at Thr-994.

Belongs to the immunoglobulin superfamily. DCC family. As to expression, expressed in skeletal muscle, heart and brain. Brain expression is hippocampus-specific.

It is found in the cell membrane. The polypeptide is Immunoglobulin superfamily DCC subclass member 4 (Igdcc4) (Mus musculus (Mouse)).